The following is a 684-amino-acid chain: G-protein-signaling modulator 2 (684 aa).

The segment at 22–357 (ASCLELALEG…HLEISREVGD (336 aa)) is important for interaction with NUMA1; INSC and FRMPD1. TPR repeat units lie at residues 24-57 (CLELALEGERLCKSGDCRAGVSFFEAAVQVGTED), 62-95 (SAIYSQLGNAYFYLHDYAKALEYHHHDLTLARTI), 102-135 (AKASGNLGNTLKVLGNFDEAIVCCQRHLDISREL), 142-184 (ARAL…AVDF), 202-235 (GRAFGNLGNTHYLLGNFRDAVIAHEQRLLIAKEF), 242-275 (RRAYSNLGNAYIFLGEFETASEYYKKTLLLARQL), 282-315 (AQSCYSLGNTYTLLQDYEKAIDYHLKHLAIAQEL), and 322-355 (GRACWSLGNAYTALGNHDQAMHFAEKHLEISREV). At Ser-132 the chain carries Phosphoserine; by PKG. Ser-352 bears the Phosphoserine; by PKG mark. Phosphoserine occurs at positions 408 and 483. At Thr-486 the chain carries Phosphothreonine. Residues 489–511 (DEGFFDLLSRFQSNRMDDQRCCL) enclose the GoLoco 1 domain. Position 501 is a phosphoserine; by PKC (Ser-501). A phosphoserine mark is found at Ser-541 and Ser-565. GoLoco domains follow at residues 544–566 (TDEFLDLLASSQSRRLDDQRASF), 594–616 (DEDFFDILVKCQGSRLDDQRCAP), and 628–650 (DEDFFSLILRSQGKRMDEQRVLL). The residue at position 607 (Ser-607) is a Phosphoserine; by PKG. Residues Arg-608, Arg-613, Arg-642, and Arg-647 each contribute to the GDP site.

Belongs to the GPSM family. In terms of assembly, interacts with the dynein-dynactin complex; this interaction is inhibited in a PLK1-dependent manner. Part of a spindle orientation complex at least composed of GNAI1, GPSM2 and NUMA1. Interacts with LLGL2. Interacts (via TPR repeat region) with INSC/inscuteable. Interacts (via TPR repeat region) with NUMA1 (via C-terminus); this interaction is direct, inhibited in a PLK1-dependent manner, prevents the binding of NUMA1 with SPAG5 and promotes spindle pole organization. INSC and NUMA1 compete for the same binding site, but INSC has higher affinity and can displace NUMA1 (in vitro). Interacts with GNAI2. Interacts (via GoLoco domains) with the GDP-bound form of GNAI1 and GNAI3; has much lower affinity for the GTP-bound form. Interaction with GDP-bound GNAI3 strongly enhances the affinity for NUMA1. Interacts (via TPR repeat region) with FRMPD1. INSC and FRMPD1 compete for the same binding site, but INSC has higher affinity and can displace FRMPD1 (in vitro). Interacts (via TPR repeat region) with FRMPD4. Identified in a complex with INSC and F2RL2/Par3. Interacts with TASOR. As to expression, ubiquitously expressed.

The protein resides in the cytoplasm. It is found in the cell cortex. Its subcellular location is the cytoskeleton. The protein localises to the spindle pole. It localises to the lateral cell membrane. Its function is as follows. Plays an important role in mitotic spindle pole organization via its interaction with NUMA1. Required for cortical dynein-dynactin complex recruitment during metaphase. Plays a role in metaphase spindle orientation. Also plays an important role in asymmetric cell divisions. Has guanine nucleotide dissociation inhibitor (GDI) activity towards G(i) alpha proteins, such as GNAI1 and GNAI3, and thereby regulates their activity. The protein is G-protein-signaling modulator 2 (GPSM2) of Homo sapiens (Human).